The primary structure comprises 217 residues: Outer-membrane lipoprotein LolB (217 aa).

The signal sequence occupies residues 1–20 (MSRAVRTLALGGLVLVGLSA). Cys21 carries the N-palmitoyl cysteine lipid modification. Cys21 carries S-diacylglycerol cysteine lipidation.

This sequence belongs to the LolB family. Monomer.

It is found in the cell outer membrane. Its function is as follows. Plays a critical role in the incorporation of lipoproteins in the outer membrane after they are released by the LolA protein. The polypeptide is Outer-membrane lipoprotein LolB (Xanthomonas euvesicatoria pv. vesicatoria (strain 85-10) (Xanthomonas campestris pv. vesicatoria)).